The primary structure comprises 290 residues: Shikimate dehydrogenase (NADP(+)) (290 aa).

Residues 21–23 (SLS) and T68 contribute to the shikimate site. Residue K72 is the Proton acceptor of the active site. NADP(+) is bound at residue E84. Residues N93 and D108 each contribute to the shikimate site. Residues 132-136 (GYGGA) and L230 each bind NADP(+). Position 232 (Y232) interacts with shikimate. G253 is a binding site for NADP(+).

It belongs to the shikimate dehydrogenase family. In terms of assembly, homodimer.

The enzyme catalyses shikimate + NADP(+) = 3-dehydroshikimate + NADPH + H(+). Its pathway is metabolic intermediate biosynthesis; chorismate biosynthesis; chorismate from D-erythrose 4-phosphate and phosphoenolpyruvate: step 4/7. Its function is as follows. Involved in the biosynthesis of the chorismate, which leads to the biosynthesis of aromatic amino acids. Catalyzes the reversible NADPH linked reduction of 3-dehydroshikimate (DHSA) to yield shikimate (SA). This Synechocystis sp. (strain ATCC 27184 / PCC 6803 / Kazusa) protein is Shikimate dehydrogenase (NADP(+)).